The sequence spans 132 residues: Small ribosomal subunit protein uS8c (132 aa).

This sequence belongs to the universal ribosomal protein uS8 family. As to quaternary structure, part of the 30S ribosomal subunit.

Its subcellular location is the plastid. It localises to the chloroplast. One of the primary rRNA binding proteins, it binds directly to 16S rRNA central domain where it helps coordinate assembly of the platform of the 30S subunit. The polypeptide is Small ribosomal subunit protein uS8c (rps8) (Physcomitrium patens (Spreading-leaved earth moss)).